The sequence spans 143 residues: 5-hydroxymethyl-dUMP N-hydrolase (143 aa).

G7, I9, R10, G11, S77, G79, E83, and S107 together coordinate 5-hydroxymethyl-dUMP.

The protein belongs to the 2'-deoxynucleoside 5'-phosphate N-hydrolase 1 family. In terms of assembly, monomer and homodimer.

The protein localises to the cytoplasm. It localises to the nucleus. The enzyme catalyses 5-hydroxymethyl-dUMP + H2O = 5-hydroxymethyluracil + 2-deoxy-D-ribose 5-phosphate. In terms of biological role, part of a nucleotide salvage pathway that eliminates epigenetically modified 5-hydroxymethyl-dCMP (hmdCMP) in a two-step process entailing deamination to cytotoxic 5-hydroxymethyl-dUMP (hmdUMP), followed by its hydrolysis into 5-hydroxymethyluracil (hmU) and 2-deoxy-D-ribose 5-phosphate (deoxyribosephosphate). The polypeptide is 5-hydroxymethyl-dUMP N-hydrolase (dnph1) (Danio rerio (Zebrafish)).